We begin with the raw amino-acid sequence, 939 residues long: Isoleucine--tRNA ligase (939 aa).

Residues 57–67 (PYANGHIHLGH) carry the 'HIGH' region motif. E561 lines the L-isoleucyl-5'-AMP pocket. The 'KMSKS' region motif lies at 602-606 (KMSKS). Position 605 (K605) interacts with ATP. The Zn(2+) site is built by C903, C906, C923, and C926.

The protein belongs to the class-I aminoacyl-tRNA synthetase family. IleS type 1 subfamily. Monomer. Zn(2+) serves as cofactor.

It is found in the cytoplasm. It carries out the reaction tRNA(Ile) + L-isoleucine + ATP = L-isoleucyl-tRNA(Ile) + AMP + diphosphate. Its function is as follows. Catalyzes the attachment of isoleucine to tRNA(Ile). As IleRS can inadvertently accommodate and process structurally similar amino acids such as valine, to avoid such errors it has two additional distinct tRNA(Ile)-dependent editing activities. One activity is designated as 'pretransfer' editing and involves the hydrolysis of activated Val-AMP. The other activity is designated 'posttransfer' editing and involves deacylation of mischarged Val-tRNA(Ile). This is Isoleucine--tRNA ligase from Desulfotalea psychrophila (strain LSv54 / DSM 12343).